The chain runs to 204 residues: ATP synthase subunit b 2 (204 aa).

A helical membrane pass occupies residues 50-70 (IFWLAVTFGLLLFLMSKVALP).

It belongs to the ATPase B chain family. In terms of assembly, F-type ATPases have 2 components, F(1) - the catalytic core - and F(0) - the membrane proton channel. F(1) has five subunits: alpha(3), beta(3), gamma(1), delta(1), epsilon(1). F(0) has three main subunits: a(1), b(2) and c(10-14). The alpha and beta chains form an alternating ring which encloses part of the gamma chain. F(1) is attached to F(0) by a central stalk formed by the gamma and epsilon chains, while a peripheral stalk is formed by the delta and b chains.

The protein localises to the cell inner membrane. Its function is as follows. F(1)F(0) ATP synthase produces ATP from ADP in the presence of a proton or sodium gradient. F-type ATPases consist of two structural domains, F(1) containing the extramembraneous catalytic core and F(0) containing the membrane proton channel, linked together by a central stalk and a peripheral stalk. During catalysis, ATP synthesis in the catalytic domain of F(1) is coupled via a rotary mechanism of the central stalk subunits to proton translocation. Component of the F(0) channel, it forms part of the peripheral stalk, linking F(1) to F(0). The b'-subunit is a diverged and duplicated form of b found in plants and photosynthetic bacteria. The chain is ATP synthase subunit b 2 (atpF2) from Rhodospirillum centenum (strain ATCC 51521 / SW).